Consider the following 452-residue polypeptide: Disintegrin and metalloproteinase domain-containing protein 11 (452 aa).

The 120-residue stretch at 1–120 folds into the Peptidase M12B domain; that stretch reads RRHHSPLLVS…GGGSCLFNKP (120 aa). The Extracellular portion of the chain corresponds to 1-417; the sequence is RRHHSPLLVS…EKYKGPSGTN (417 aa). Intrachain disulfides connect cysteine 31-cysteine 115, cysteine 74-cysteine 99, and cysteine 76-cysteine 83. The Disintegrin domain maps to 126–214; sequence PPSCGNGFIE…ACPANLHKQD (89 aa). A glycan (N-linked (GlcNAc...) asparagine) is linked at asparagine 149. Cysteine 186 and cysteine 206 are oxidised to a cystine. Asparagine 288 and asparagine 356 each carry an N-linked (GlcNAc...) asparagine glycan. 3 cysteine pairs are disulfide-bonded: cysteine 360–cysteine 375, cysteine 369–cysteine 381, and cysteine 383–cysteine 392. In terms of domain architecture, EGF-like spans 360–416; the sequence is CPGSWNGVICSDHGVCSNEGKCICHPEWTGKDCSVYDPLPVPKPTGVVEKYKGPSGT. A helical membrane pass occupies residues 418–438; that stretch reads IIIGSIAGAVLIAAIVLGGTG. At 439–452 the chain is on the cytoplasmic side; sequence WGFKNIRRGRSGGG.

The precursor is cleaved by a furin endopeptidase. As to expression, detected in testis and barely expressed in heart and muscle. Not detectable in liver.

The protein localises to the presynaptic cell membrane. It is found in the perikaryon. The protein resides in the cell projection. It localises to the axon. In terms of biological role, probable ligand for integrin in the brain. This is a non-catalytic metalloprotease-like protein. The sequence is that of Disintegrin and metalloproteinase domain-containing protein 11 (adam11) from Xenopus laevis (African clawed frog).